Consider the following 727-residue polypeptide: Glucans biosynthesis glucosyltransferase H (727 aa).

Residues 17–41 (GSAMPNERPGPMEPQSLSQMPEGFP) are disordered. Transmembrane regions (helical) follow at residues 58-80 (FFVV…AVFS), 95-117 (FAIN…LLLL), 407-429 (GIMA…MLAL), 457-479 (ALRL…VLLL), 499-521 (VLFE…CGAV), and 572-594 (LLAW…AWTG).

Belongs to the glycosyltransferase 2 family. OpgH subfamily.

It localises to the cell inner membrane. It functions in the pathway glycan metabolism; osmoregulated periplasmic glucan (OPG) biosynthesis. Involved in the biosynthesis of osmoregulated periplasmic glucans (OPGs). The protein is Glucans biosynthesis glucosyltransferase H of Shewanella oneidensis (strain ATCC 700550 / JCM 31522 / CIP 106686 / LMG 19005 / NCIMB 14063 / MR-1).